Consider the following 202-residue polypeptide: tRNA (guanine-N(7)-)-methyltransferase (202 aa).

Residues glutamate 34, glutamate 59, aspartate 86, and aspartate 107 each contribute to the S-adenosyl-L-methionine site. The active site involves aspartate 107. Substrate-binding positions include lysine 111, aspartate 143, and 181–184; that span reads TDYE.

Belongs to the class I-like SAM-binding methyltransferase superfamily. TrmB family.

It carries out the reaction guanosine(46) in tRNA + S-adenosyl-L-methionine = N(7)-methylguanosine(46) in tRNA + S-adenosyl-L-homocysteine. The protein operates within tRNA modification; N(7)-methylguanine-tRNA biosynthesis. Functionally, catalyzes the formation of N(7)-methylguanine at position 46 (m7G46) in tRNA. In Metamycoplasma hominis (strain ATCC 23114 / DSM 25592 / NBRC 14850 / NCTC 10111 / PG21) (Mycoplasma hominis), this protein is tRNA (guanine-N(7)-)-methyltransferase.